We begin with the raw amino-acid sequence, 518 residues long: Cytochrome P450 26C1 (518 aa).

A helical transmembrane segment spans residues 293–313 (LLFAAFFTTASASTSLILLLL). C455 lines the heme pocket.

The protein belongs to the cytochrome P450 family. It depends on heme as a cofactor.

It localises to the membrane. The enzyme catalyses an organic molecule + reduced [NADPH--hemoprotein reductase] + O2 = an alcohol + oxidized [NADPH--hemoprotein reductase] + H2O + H(+). It carries out the reaction all-trans-retinoate + reduced [NADPH--hemoprotein reductase] + O2 = all-trans-4-hydroxyretinoate + oxidized [NADPH--hemoprotein reductase] + H2O + H(+). It catalyses the reaction all-trans-4-hydroxyretinoate + reduced [NADPH--hemoprotein reductase] + O2 = all-trans-4-oxoretinoate + oxidized [NADPH--hemoprotein reductase] + 2 H2O + H(+). The catalysed reaction is 9-cis-retinoate + reduced [NADPH--hemoprotein reductase] + O2 = 9-cis-4-hydroxyretinoate + oxidized [NADPH--hemoprotein reductase] + H2O + H(+). The enzyme catalyses 9-cis-4-hydroxyretinoate + reduced [NADPH--hemoprotein reductase] + O2 = 9-cis-4-oxoretinoate + oxidized [NADPH--hemoprotein reductase] + 2 H2O + H(+). It carries out the reaction all-trans-4-hydroxy-13,14-dihydroretinoate + reduced [NADPH--hemoprotein reductase] + O2 = all-trans-4-oxo-13,14-dihydroretinoate + oxidized [NADPH--hemoprotein reductase] + 2 H2O + H(+). It catalyses the reaction all-trans-13,14-dihydroretinoate + reduced [NADPH--hemoprotein reductase] + O2 = all-trans-4-hydroxy-13,14-dihydroretinoate + oxidized [NADPH--hemoprotein reductase] + H2O + H(+). Functionally, a cytochrome P450 monooxygenase involved in the metabolism of retinoates (RAs), the active metabolites of vitamin A, and critical signaling molecules in animals. RAs exist as at least four different isomers: all-trans-RA (atRA), 9-cis-RA, 13-cis-RA, and 9,13-dicis-RA, where atRA is considered to be the biologically active isomer, although 9-cis-RA and 13-cis-RA also have activity. Catalyzes the oxidation of atRA primarily at C-4. Oxidation of atRA limits its biological activity and initiates a degradative process leading to its eventual elimination, thereby contributes to the regulation of atRA homeostasis and signaling. Able to metabolize other RAs such as 9-cis with high efficiency. Can oxidize all-trans-13,14-dihydroretinoate (DRA) to metabolites which could include all-trans-4-oxo-DRA, all-trans-4-hydroxy-DRA, all-trans-5,8-epoxy-DRA, and all-trans-18-hydroxy-DRA. Shares sequence similarity with other CYP26 family members, but has higher affinity to 9-cis-RA and is much less sensitive to the inhibitory effects of ketoconazole. In cooperation with Cyp26a1, contributes to the CNS patterning and the development of regions of higher visual acuity. In Mus musculus (Mouse), this protein is Cytochrome P450 26C1.